Consider the following 964-residue polypeptide: Protein translocase subunit SecA (964 aa).

Residues Gln-86, 104-108 (GEGKT), and Asp-494 contribute to the ATP site. The segment at 848–964 (AESADTIAVA…YKMCHGQNEK (117 aa)) is disordered. The segment covering 871–882 (AEGEVEEEDEDT) has biased composition (acidic residues). Positions 889–900 (AESAAASGAGES) are enriched in low complexity. Zn(2+)-binding residues include Cys-947, Cys-949, Cys-958, and His-959.

Belongs to the SecA family. In terms of assembly, monomer and homodimer. Part of the essential Sec protein translocation apparatus which comprises SecA, SecYEG and auxiliary proteins SecDF. Other proteins may also be involved. Zn(2+) is required as a cofactor.

The protein localises to the cell membrane. The protein resides in the cytoplasm. The catalysed reaction is ATP + H2O + cellular proteinSide 1 = ADP + phosphate + cellular proteinSide 2.. Its function is as follows. Part of the Sec protein translocase complex. Interacts with the SecYEG preprotein conducting channel. Has a central role in coupling the hydrolysis of ATP to the transfer of proteins into and across the cell membrane, serving as an ATP-driven molecular motor driving the stepwise translocation of polypeptide chains across the membrane. This chain is Protein translocase subunit SecA, found in Bifidobacterium longum (strain NCC 2705).